The primary structure comprises 311 residues: Cytosolic Fe-S cluster assembly factor Nubp1 homolog (311 aa).

A disordered region spans residues Met-1 to Gly-20. The [4Fe-4S] cluster site is built by Cys-9, Cys-23, Cys-26, and Cys-32. Gly-63–Ser-70 provides a ligand contact to ATP. Residues Cys-240 and Cys-243 each coordinate [4Fe-4S] cluster.

The protein belongs to the Mrp/NBP35 ATP-binding proteins family. NUBP1/NBP35 subfamily. As to quaternary structure, heterotetramer of 2 Nubp1 and 2 Nubp2 chains. [4Fe-4S] cluster is required as a cofactor.

Its subcellular location is the cytoplasm. Its function is as follows. Component of the cytosolic iron-sulfur (Fe/S) protein assembly (CIA) machinery. Required for maturation of extramitochondrial Fe-S proteins. The Nubp1-Nubp2 heterotetramer forms a Fe-S scaffold complex, mediating the de novo assembly of an Fe-S cluster and its transfer to target apoproteins. This Drosophila simulans (Fruit fly) protein is Cytosolic Fe-S cluster assembly factor Nubp1 homolog.